Consider the following 397-residue polypeptide: Acetate kinase (397 aa).

Asn8 contacts Mg(2+). Lys15 serves as a coordination point for ATP. Arg89 serves as a coordination point for substrate. The active-site Proton donor/acceptor is Asp146. Residues 206-210 (HLGNG), 281-283 (DLR), and 329-333 (GVGEN) contribute to the ATP site. Position 382 (Glu382) interacts with Mg(2+).

This sequence belongs to the acetokinase family. Homodimer. The cofactor is Mg(2+). Mn(2+) is required as a cofactor.

The protein resides in the cytoplasm. The catalysed reaction is acetate + ATP = acetyl phosphate + ADP. Its pathway is metabolic intermediate biosynthesis; acetyl-CoA biosynthesis; acetyl-CoA from acetate: step 1/2. Its function is as follows. Catalyzes the formation of acetyl phosphate from acetate and ATP. Can also catalyze the reverse reaction. The chain is Acetate kinase from Bacillus cereus (strain ATCC 14579 / DSM 31 / CCUG 7414 / JCM 2152 / NBRC 15305 / NCIMB 9373 / NCTC 2599 / NRRL B-3711).